The sequence spans 970 residues: Sodium/calcium exchanger 1 (970 aa).

A signal peptide spans M1–A32. Residues D33–K71 lie on the Extracellular side of the membrane. Residue N41 is glycosylated (N-linked (GlcNAc...) asparagine). The chain crosses the membrane as a helical span at residues I72–I92. Residues A93–N133 are Cytoplasmic-facing. A helical transmembrane segment spans residues L134 to C154. The Alpha-1 repeat unit spans residues A138–I178. The Extracellular segment spans residues G155–T167. N-linked (GlcNAc...) asparagine glycosylation is present at N157. The helical transmembrane segment at I168–P188 threads the bilayer. The Cytoplasmic segment spans residues D189–F201. The helical transmembrane segment at F202 to S222 threads the bilayer. Residues S223–E228 lie on the Extracellular side of the membrane. Residues V229–A249 form a helical membrane-spanning segment. The Cytoplasmic portion of the chain corresponds to D250–G797. The tract at residues R251–G270 is putative calmodulin-binding region. Phosphoserine occurs at positions 282 and 389. Calx-beta domains are found at residues V393–S493 and A524–G624. The Ca(2+) site is built by E417, D453, D478, D479, I481, E483, E486, D530, D531, D532, E548, D584, D610, E611, E612, and E715. A helical transmembrane segment spans residues W798 to L818. Residues A819–H821 lie on the Extracellular side of the membrane. A helical membrane pass occupies residues F822–T842. An Alpha-2 repeat occupies A839 to V875. The Cytoplasmic portion of the chain corresponds to S843–N871. The helical transmembrane segment at A872–A892 threads the bilayer. The Extracellular segment spans residues N893–T903. The chain crosses the membrane as a helical span at residues L904–Y924. The Cytoplasmic segment spans residues R925–K941. A helical membrane pass occupies residues L942–E962. Over A963–F970 the chain is Extracellular.

It belongs to the Ca(2+):cation antiporter (CaCA) (TC 2.A.19) family. SLC8 subfamily. As to expression, detected in heart, kidney and brain (at protein level).

The protein resides in the cell membrane. It carries out the reaction Ca(2+)(in) + 3 Na(+)(out) = Ca(2+)(out) + 3 Na(+)(in). Its activity is regulated as follows. Activated by micromolar levels of Ca(2+). Its function is as follows. Mediates the exchange of one Ca(2+) ion against three to four Na(+) ions across the cell membrane, and thereby contributes to the regulation of cytoplasmic Ca(2+) levels and Ca(2+)-dependent cellular processes. Contributes to Ca(2+) transport during excitation-contraction coupling in muscle. In a first phase, voltage-gated channels mediate the rapid increase of cytoplasmic Ca(2+) levels due to release of Ca(2+) stores from the endoplasmic reticulum. SLC8A1 mediates the export of Ca(2+) from the cell during the next phase, so that cytoplasmic Ca(2+) levels rapidly return to baseline. Required for normal embryonic heart development and the onset of heart contractions. This chain is Sodium/calcium exchanger 1 (Slc8a1), found in Mus musculus (Mouse).